The primary structure comprises 194 residues: Granulocyte colony-stimulating factor (194 aa).

Positions 1 to 20 are cleaved as a signal peptide; it reads KLMALQLLLWHSALWMVQEA. 2 disulfide bridges follow: cysteine 56–cysteine 62 and cysteine 84–cysteine 94. Residue threonine 153 is glycosylated (O-linked (GalNAc...) threonine).

The protein belongs to the IL-6 superfamily. As to quaternary structure, monomer. Post-translationally, O-glycosylated.

It is found in the secreted. Its function is as follows. Granulocyte/macrophage colony-stimulating factors are cytokines that act in hematopoiesis by controlling the production, differentiation, and function of 2 related white cell populations of the blood, the granulocytes and the monocytes-macrophages. This CSF induces granulocytes. This is Granulocyte colony-stimulating factor (CSF3) from Felis catus (Cat).